Here is a 154-residue protein sequence, read N- to C-terminus: 6,7-dimethyl-8-ribityllumazine synthase (154 aa).

Residues phenylalanine 22, 56–58, and 80–82 each bind 5-amino-6-(D-ribitylamino)uracil; these read AFE and AVI. 85–86 is a binding site for (2S)-2-hydroxy-3-oxobutyl phosphate; that stretch reads ET. The active-site Proton donor is the histidine 88. 5-amino-6-(D-ribitylamino)uracil is bound at residue phenylalanine 113. Arginine 127 is a binding site for (2S)-2-hydroxy-3-oxobutyl phosphate.

Belongs to the DMRL synthase family.

The catalysed reaction is (2S)-2-hydroxy-3-oxobutyl phosphate + 5-amino-6-(D-ribitylamino)uracil = 6,7-dimethyl-8-(1-D-ribityl)lumazine + phosphate + 2 H2O + H(+). It functions in the pathway cofactor biosynthesis; riboflavin biosynthesis; riboflavin from 2-hydroxy-3-oxobutyl phosphate and 5-amino-6-(D-ribitylamino)uracil: step 1/2. Functionally, catalyzes the formation of 6,7-dimethyl-8-ribityllumazine by condensation of 5-amino-6-(D-ribitylamino)uracil with 3,4-dihydroxy-2-butanone 4-phosphate. This is the penultimate step in the biosynthesis of riboflavin. The polypeptide is 6,7-dimethyl-8-ribityllumazine synthase (Thermoanaerobacter sp. (strain X514)).